The chain runs to 1232 residues: Dynactin subunit 1 (1232 aa).

In terms of domain architecture, CAP-Gly spans 31-73 (GATLFATGKWVGVILDDSKGKNDGTVQGRRYFTCEENHGIFVR). 2 disordered regions span residues 82-183 (DGAD…AQVK) and 339-358 (SASE…KKNT). The span at 86–95 (TTSPETPEPT) shows a compositional bias: low complexity. The segment covering 108–117 (PKSSKLPTRP) has biased composition (polar residues). Residues 118–130 (SSSAASSGTASAS) are compositionally biased toward low complexity. The span at 133-144 (EISSSEPSTPAQ) shows a compositional bias: polar residues. A compositionally biased stretch (low complexity) spans 146 to 163 (PLAAPIIPSPSSAITSPV). Coiled-coil stretches lie at residues 170–505 (GPSK…KEQQ), 908–1005 (ETVI…RTIE), 1046–1071 (LLLQ…LKAH), and 1136–1166 (AAQL…ETVS). Residues 172–183 (SKEEENLRAQVK) are compositionally biased toward basic and acidic residues.

Belongs to the dynactin 150 kDa subunit family. Monomer and homodimer. Subunit of dynactin, a multiprotein complex part of a tripartite complex with dynein and a adapter, such as BICDL1, BICD2 or HOOK3. The dynactin complex is built around ACTR1A/ACTB filament and consists of an actin-related filament composed of a shoulder domain, a pointed end and a barbed end. Its length is defined by its flexible shoulder domain. The soulder is composed of 2 DCTN1 subunits, 4 DCTN2 and 2 DCTN3. DCTN1/p150(glued) binds directly to microtubules and to cytoplasmic dynein.

The protein resides in the cytoplasm. It localises to the cytoskeleton. The protein localises to the microtubule organizing center. It is found in the centrosome. Its subcellular location is the centriole. The protein resides in the spindle. It localises to the cell cortex. Part of the dynactin complex that activates the molecular motor dynein for ultra-processive transport along microtubules. Plays a key role in dynein-mediated retrograde transport of vesicles and organelles along microtubules by recruiting and tethering dynein to microtubules. Binds to both dynein and microtubules providing a link between specific cargos, microtubules and dynein. Essential for targeting dynein to microtubule plus ends, recruiting dynein to membranous cargos and enhancing dynein processivity (the ability to move along a microtubule for a long distance without falling off the track). Can also act as a brake to slow the dynein motor during motility along the microtubule. Can regulate microtubule stability by promoting microtubule formation, nucleation and polymerization and by inhibiting microtubule catastrophe in neurons. Inhibits microtubule catastrophe by binding both to microtubules and to tubulin, leading to enhanced microtubule stability along the axon. Plays a role in metaphase spindle orientation. Plays a role in centriole cohesion and subdistal appendage organization and function. Its recruitment to the centriole in a KIF3A-dependent manner is essential for the maintenance of centriole cohesion and the formation of subdistal appendage. Also required for microtubule anchoring at the mother centriole. Plays a role in primary cilia formation. The polypeptide is Dynactin subunit 1 (dctn1) (Xenopus laevis (African clawed frog)).